A 364-amino-acid polypeptide reads, in one-letter code: Putative zinc metalloprotease all3971 (364 aa).

Histidine 17 contacts Zn(2+). Residue glutamate 18 is part of the active site. Position 21 (histidine 21) interacts with Zn(2+). The next 3 membrane-spanning stretches (helical) occupy residues 92–114 (AIVI…LAQV), 281–303 (LFFF…LPAL), and 329–346 (VMQT…FLIV). One can recognise a PDZ domain in the interval 103-188 (LIFAYMLLLA…KSIQLTVARG (86 aa)).

This sequence belongs to the peptidase M50B family. Requires Zn(2+) as cofactor.

The protein localises to the cell inner membrane. This chain is Putative zinc metalloprotease all3971, found in Nostoc sp. (strain PCC 7120 / SAG 25.82 / UTEX 2576).